The sequence spans 258 residues: Adenosylcobinamide-GDP ribazoletransferase (258 aa).

6 consecutive transmembrane segments (helical) span residues 41-61, 65-85, 115-135, 136-156, 197-217, and 236-256; these read FFPL…WLAS, PAPG…TGAF, IGAF…QLLM, AMAA…HAAS, LPLL…LLAA, and CLGL…LAWT.

Belongs to the CobS family. Requires Mg(2+) as cofactor.

Its subcellular location is the cell inner membrane. It catalyses the reaction alpha-ribazole + adenosylcob(III)inamide-GDP = adenosylcob(III)alamin + GMP + H(+). It carries out the reaction alpha-ribazole 5'-phosphate + adenosylcob(III)inamide-GDP = adenosylcob(III)alamin 5'-phosphate + GMP + H(+). It participates in cofactor biosynthesis; adenosylcobalamin biosynthesis; adenosylcobalamin from cob(II)yrinate a,c-diamide: step 7/7. Its function is as follows. Joins adenosylcobinamide-GDP and alpha-ribazole to generate adenosylcobalamin (Ado-cobalamin). Also synthesizes adenosylcobalamin 5'-phosphate from adenosylcobinamide-GDP and alpha-ribazole 5'-phosphate. This Ralstonia nicotianae (strain ATCC BAA-1114 / GMI1000) (Ralstonia solanacearum) protein is Adenosylcobinamide-GDP ribazoletransferase.